The following is a 170-amino-acid chain: Allophycocyanin subunit beta-18 (170 aa).

At Asn-74 the chain carries N4-methylasparagine. Position 84 (Cys-84) interacts with (2R,3E)-phycocyanobilin.

Belongs to the phycobiliprotein family. Heterodimer of an alpha and a beta chain. Contains one covalently linked bilin chromophore.

It is found in the plastid. The protein resides in the chloroplast thylakoid membrane. Light-harvesting photosynthetic bile pigment-protein from the phycobiliprotein complex. Allophycocyanin has a maximum absorption at approximately 650 nanometers. In Cyanidium caldarium (Red alga), this protein is Allophycocyanin subunit beta-18 (apcF).